Reading from the N-terminus, the 227-residue chain is Cytochrome c oxidase subunit 2 (227 aa).

Residues 1–14 (MALPFQLGFQDATS) are Mitochondrial intermembrane-facing. A helical membrane pass occupies residues 15–45 (PIMEELLHFHDHTLMIVFMISSLVLYLISSM). Topologically, residues 46-59 (LTTRLTHTSTMDAQ) are mitochondrial matrix. The helical transmembrane segment at 60–87 (EVETIWTILPAIILITIALPSLRILYMM) threads the bilayer. The Mitochondrial intermembrane segment spans residues 88-227 (DEINNPSMTI…CFEKWSTSML (140 aa)). Cu cation contacts are provided by H161, C196, E198, C200, H204, and M207. Residue E198 coordinates Mg(2+).

This sequence belongs to the cytochrome c oxidase subunit 2 family. In terms of assembly, component of the cytochrome c oxidase (complex IV, CIV), a multisubunit enzyme composed of 14 subunits. The complex is composed of a catalytic core of 3 subunits MT-CO1, MT-CO2 and MT-CO3, encoded in the mitochondrial DNA, and 11 supernumerary subunits COX4I, COX5A, COX5B, COX6A, COX6B, COX6C, COX7A, COX7B, COX7C, COX8 and NDUFA4, which are encoded in the nuclear genome. The complex exists as a monomer or a dimer and forms supercomplexes (SCs) in the inner mitochondrial membrane with NADH-ubiquinone oxidoreductase (complex I, CI) and ubiquinol-cytochrome c oxidoreductase (cytochrome b-c1 complex, complex III, CIII), resulting in different assemblies (supercomplex SCI(1)III(2)IV(1) and megacomplex MCI(2)III(2)IV(2)). Found in a complex with TMEM177, COA6, COX18, COX20, SCO1 and SCO2. Interacts with TMEM177 in a COX20-dependent manner. Interacts with COX20. Interacts with COX16. Cu cation is required as a cofactor.

The protein localises to the mitochondrion inner membrane. The catalysed reaction is 4 Fe(II)-[cytochrome c] + O2 + 8 H(+)(in) = 4 Fe(III)-[cytochrome c] + 2 H2O + 4 H(+)(out). Component of the cytochrome c oxidase, the last enzyme in the mitochondrial electron transport chain which drives oxidative phosphorylation. The respiratory chain contains 3 multisubunit complexes succinate dehydrogenase (complex II, CII), ubiquinol-cytochrome c oxidoreductase (cytochrome b-c1 complex, complex III, CIII) and cytochrome c oxidase (complex IV, CIV), that cooperate to transfer electrons derived from NADH and succinate to molecular oxygen, creating an electrochemical gradient over the inner membrane that drives transmembrane transport and the ATP synthase. Cytochrome c oxidase is the component of the respiratory chain that catalyzes the reduction of oxygen to water. Electrons originating from reduced cytochrome c in the intermembrane space (IMS) are transferred via the dinuclear copper A center (CU(A)) of subunit 2 and heme A of subunit 1 to the active site in subunit 1, a binuclear center (BNC) formed by heme A3 and copper B (CU(B)). The BNC reduces molecular oxygen to 2 water molecules using 4 electrons from cytochrome c in the IMS and 4 protons from the mitochondrial matrix. The chain is Cytochrome c oxidase subunit 2 (MT-CO2) from Phyllostomus hastatus (Greater spear-nosed bat).